The following is a 384-amino-acid chain: N-acetylneuraminate epimerase (384 aa).

The first 24 residues, 1–24 (MNMKTLLTYATLLSVTAFSHVVYA), serve as a signal peptide directing secretion. Kelch repeat units lie at residues 46 to 90 (KVYV…SVIG), 92 to 145 (YIYL…YSPD), 147 to 184 (RQILFFGGYNKAYFDRYLRDISTTDKQVNPEVWQRIVD), 185 to 230 (DYMG…VIEG), 233 to 281 (VTLI…VAGA), 303 to 352 (QAFE…TTSE), and 354 to 383 (VLIVGGEKSGKEMSHKVYMLAWNGSTVEVI). E239 functions as the Proton acceptor in the catalytic mechanism.

Belongs to the NanM family. As to quaternary structure, homodimer.

Its subcellular location is the periplasm. It catalyses the reaction N-acetyl-alpha-neuraminate = N-acetyl-beta-neuraminate. Its function is as follows. Converts alpha-N-acetylneuranimic acid (Neu5Ac) to the beta-anomer, accelerating the equilibrium between the alpha- and beta-anomers. Probably facilitates sialidase-negative bacteria to compete successfully for limited amounts of extracellular Neu5Ac, which is likely taken up in the beta-anomer. In addition, the rapid removal of sialic acid from solution might be advantageous to the bacterium to damp down host responses. The sequence is that of N-acetylneuraminate epimerase from Vibrio cholerae serotype O1 (strain ATCC 39315 / El Tor Inaba N16961).